We begin with the raw amino-acid sequence, 1079 residues long: Capping protein inhibiting regulator of actin dynamics (1079 aa).

Positions 1–11 (MSQENVSDKVR) are enriched in basic and acidic residues. Disordered stretches follow at residues 1–293 (MSQE…EEER), 308–327 (ERKR…AEKR), 341–383 (EHRI…EWKR), 420–453 (PVTP…PTLS), 493–522 (EGKK…VFES), 606–639 (IFGQ…VQSR), and 658–1054 (PSFL…TTQV). Over residues 36-45 (DEGSSDEEEV) the composition is skewed to acidic residues. The segment covering 64-76 (SAKEKSVSHDTVQ) has biased composition (basic and acidic residues). Residues 115–134 (AKHKLSVKPKNQRVSRKHRR) are compositionally biased toward basic residues. A compositionally biased stretch (acidic residues) spans 140–158 (HEDDFSEIQEEFEKDEEVF). Residues 159 to 293 (DSSREDYGII…EERKRAEEER (135 aa)) are compositionally biased toward basic and acidic residues. Positions 420-434 (PVTPATGQQGETTAE) are enriched in polar residues. Residues 670-682 (PKSQRSESGSPIQ) are compositionally biased toward polar residues. The segment covering 684-695 (ESEDSDTKDEDG) has biased composition (acidic residues). The span at 756 to 781 (DNSTLSEKSSPISPQQENIEFQTTVA) shows a compositional bias: polar residues. 2 stretches are compositionally biased toward basic and acidic residues: residues 896-930 (WREK…DKET) and 944-983 (GFRE…EDKG). Positions 984-993 (NGSSSIISKH) are enriched in polar residues. Over residues 994–1016 (QTADENKRPDTLLARFERRDNLK) the composition is skewed to basic and acidic residues. Over residues 1020–1033 (TLPSSVTVEITDST) the composition is skewed to polar residues.

Directly interacts with actin-capping proteins; this interaction decreases the binding of capping proteins to actin.

The protein resides in the cytoplasm. The protein localises to the cytosol. Functionally, involved in epithelial cell integrity by acting on the maintenance of the actin cytoskeleton. Positively regulates the actin polymerization, by inhibiting the interaction of actin-capping proteins with actin. The protein is Capping protein inhibiting regulator of actin dynamics (crad) of Danio rerio (Zebrafish).